We begin with the raw amino-acid sequence, 514 residues long: MRAFLALIFLTFVMNVESSRPLMAFTPSHGWMNDPNGQFYDSKNELWHLYYQYNPNDTVWGTPLYWGHATSKDLSTWKDYGATIGPDRDEDGIFSGNIVVDHNNTSGFFNDSIDPRQRVVAIYTYNTEGSQTQHVAYSLDGGYTFEKYEHNPVLDVDNINFRDPKVFWHEPTNQWIMVIALSQQFKIQIYGSIDLTNWSLHSNFTGGLFGFQYECPGLIEVPVEGTDESKWVMFIAINPGSPLGGSSNQYFIGSFDGFEFVPDDSQARLMDYGKDFYAFQTFDNAPKESGVVGLAWASNWQYANLAPTKEWRSSMTLARQMTLASRNMNPETKVLSLLQKPIFGESVVAANKISKRNITGQDEQAVKIHKNSTGTFSFDITFSVDSSKNQTGQLQVISGQNGESIRAGFDPTAGQFFVDRGNTSGLKENPFFTDKTSAYVEPWKHQNDLPVYKMFGVIDGNLIEVFLNDGIATLTNTFFIPGTEGLEYLEIESSSDAIHIVESEVKELKLRATS.

The signal sequence occupies residues 1–18 (MRAFLALIFLTFVMNVES). Substrate-binding positions include 33–34 (ND) and glutamine 52. Catalysis depends on aspartate 34, which acts as the Nucleophile. A glycan (N-linked (GlcNAc...) asparagine) is linked at asparagine 56. The substrate site is built by tryptophan 60 and serine 95. Residues asparagine 104 and asparagine 110 are each glycosylated (N-linked (GlcNAc...) asparagine). A substrate-binding site is contributed by 162–163 (RD). N-linked (GlcNAc...) asparagine glycosylation is found at asparagine 197 and asparagine 203. 2 residues coordinate substrate: glutamate 214 and tryptophan 300. The Proton donor/acceptor role is filled by glutamate 214. Residues asparagine 357, asparagine 371, asparagine 389, and asparagine 422 are each glycosylated (N-linked (GlcNAc...) asparagine).

Belongs to the glycosyl hydrolase 32 family.

It localises to the secreted. The enzyme catalyses Hydrolysis of terminal, non-reducing (2-&gt;1)- and (2-&gt;6)-linked beta-D-fructofuranose residues in fructans.. Exo-inulinase involved in utilization of the plant storage polymer inulin, consisting of fructooligosaccharides with a degree of polymerization (DP) value from 2 to 60. Splits off terminal fructose units successively from the non-reducing end of the inulin molecule. The polypeptide is Extracellular exo-inulinase (Meyerozyma guilliermondii (strain ATCC 6260 / CBS 566 / DSM 6381 / JCM 1539 / NBRC 10279 / NRRL Y-324) (Yeast)).